Here is a 25-residue protein sequence, read N- to C-terminus: Bifunctional chitinase/lysozyme (25 aa).

The protein belongs to the glycosyl hydrolase 19 family. Chitinase class I subfamily. In terms of assembly, monomer.

Its subcellular location is the secreted. The protein localises to the extracellular space. It carries out the reaction Random endo-hydrolysis of N-acetyl-beta-D-glucosaminide (1-&gt;4)-beta-linkages in chitin and chitodextrins.. The enzyme catalyses Hydrolysis of (1-&gt;4)-beta-linkages between N-acetylmuramic acid and N-acetyl-D-glucosamine residues in a peptidoglycan and between N-acetyl-D-glucosamine residues in chitodextrins.. Functionally, bifunctional enzyme with lysozyme/chitinase activity. This chain is Bifunctional chitinase/lysozyme, found in Carica papaya (Papaya).